The sequence spans 370 residues: Metalloproteinase (370 aa).

Residues 1-15 (MYLAYIFFLFATVSA) form the signal peptide. The Peptidase M12B domain occupies 170-370 (IVIEVLLVTD…DNYGKIFRMF (201 aa)). Asn-226 carries N-linked (GalNAc...) asparagine glycosylation. His-320 is a binding site for Zn(2+). Glu-321 is an active-site residue. Residues His-324 and His-330 each coordinate Zn(2+).

It belongs to the venom metalloproteinase (M12B) family. Expressed by the venom gland.

It localises to the secreted. Metalloprotease that may disrupt the cell matrix and the process of clotting blood or hemolymph. This chain is Metalloproteinase, found in Tityus obscurus (Amazonian scorpion).